The primary structure comprises 667 residues: Tripartite terminase subunit 3 (667 aa).

The Walker A motif signature appears at 208-215 (VPRRHGKT). The Walker B motif motif lies at 301-306 (LLIVDE). The active-site For ATPase activity is E306. Active-site for nuclease activity residues include D459, E530, and D644.

Belongs to the herpesviridae TRM3 protein family. In terms of assembly, interacts with the terminase subunits TRM1 and TRM2. Interacts with portal protein.

It is found in the host nucleus. Component of the molecular motor that translocates viral genomic DNA in empty capsid during DNA packaging. Forms a tripartite terminase complex together with TRM1 and TRM2 in the host cytoplasm. Once the complex reaches the host nucleus, it interacts with the capsid portal vertex. This portal forms a ring in which genomic DNA is translocated into the capsid. TRM3 carries an RNase H-like nuclease activity that plays an important role for the cleavage of concatemeric viral DNA into unit length genomes. The polypeptide is Tripartite terminase subunit 3 (Human herpesvirus 6A (strain Uganda-1102) (HHV-6 variant A)).